Reading from the N-terminus, the 203-residue chain is Outer-membrane lipoprotein carrier protein (203 aa).

The N-terminal stretch at M1–A21 is a signal peptide.

It belongs to the LolA family. Monomer.

Its subcellular location is the periplasm. Participates in the translocation of lipoproteins from the inner membrane to the outer membrane. Only forms a complex with a lipoprotein if the residue after the N-terminal Cys is not an aspartate (The Asp acts as a targeting signal to indicate that the lipoprotein should stay in the inner membrane). The chain is Outer-membrane lipoprotein carrier protein from Photorhabdus laumondii subsp. laumondii (strain DSM 15139 / CIP 105565 / TT01) (Photorhabdus luminescens subsp. laumondii).